A 454-amino-acid chain; its full sequence is Bifunctional protein GlmU (454 aa).

The segment at 1-226 is pyrophosphorylase; that stretch reads MSLEIVILAA…AMEVQGVNDR (226 aa). UDP-N-acetyl-alpha-D-glucosamine-binding positions include 8–11, Lys22, Gln73, 78–79, 99–101, Gly136, Glu151, Asn166, and Asn224; these read LAAG, GT, and YGD. Residue Asp101 coordinates Mg(2+). Position 224 (Asn224) interacts with Mg(2+). Residues 227 to 247 are linker; that stretch reads MQQAQLERHYQRLRAEELMRQ. The interval 248 to 454 is N-acetyltransferase; it reads GVTLLDPQRL…NWKRPEKIRK (207 aa). Arg330 and Lys348 together coordinate UDP-N-acetyl-alpha-D-glucosamine. Catalysis depends on His360, which acts as the Proton acceptor. UDP-N-acetyl-alpha-D-glucosamine contacts are provided by Tyr363 and Asn374. Acetyl-CoA contacts are provided by residues Ala377, 383 to 384, Ser402, Ala420, and Arg437; that span reads NY.

The protein in the N-terminal section; belongs to the N-acetylglucosamine-1-phosphate uridyltransferase family. It in the C-terminal section; belongs to the transferase hexapeptide repeat family. In terms of assembly, homotrimer. Requires Mg(2+) as cofactor.

Its subcellular location is the cytoplasm. It catalyses the reaction alpha-D-glucosamine 1-phosphate + acetyl-CoA = N-acetyl-alpha-D-glucosamine 1-phosphate + CoA + H(+). The catalysed reaction is N-acetyl-alpha-D-glucosamine 1-phosphate + UTP + H(+) = UDP-N-acetyl-alpha-D-glucosamine + diphosphate. Its pathway is nucleotide-sugar biosynthesis; UDP-N-acetyl-alpha-D-glucosamine biosynthesis; N-acetyl-alpha-D-glucosamine 1-phosphate from alpha-D-glucosamine 6-phosphate (route II): step 2/2. The protein operates within nucleotide-sugar biosynthesis; UDP-N-acetyl-alpha-D-glucosamine biosynthesis; UDP-N-acetyl-alpha-D-glucosamine from N-acetyl-alpha-D-glucosamine 1-phosphate: step 1/1. It participates in bacterial outer membrane biogenesis; LPS lipid A biosynthesis. Catalyzes the last two sequential reactions in the de novo biosynthetic pathway for UDP-N-acetylglucosamine (UDP-GlcNAc). The C-terminal domain catalyzes the transfer of acetyl group from acetyl coenzyme A to glucosamine-1-phosphate (GlcN-1-P) to produce N-acetylglucosamine-1-phosphate (GlcNAc-1-P), which is converted into UDP-GlcNAc by the transfer of uridine 5-monophosphate (from uridine 5-triphosphate), a reaction catalyzed by the N-terminal domain. The polypeptide is Bifunctional protein GlmU (Pseudomonas paraeruginosa (strain DSM 24068 / PA7) (Pseudomonas aeruginosa (strain PA7))).